The primary structure comprises 357 residues: 3-isopropylmalate dehydrogenase (357 aa).

76–89 (GPKWDDLPSEKRPE) provides a ligand contact to NAD(+). Residues arginine 96, arginine 106, arginine 135, and aspartate 224 each contribute to the substrate site. The Mg(2+) site is built by aspartate 224, aspartate 248, and aspartate 252. NAD(+) is bound at residue 282–294 (GSAPDIAGQDKAN).

Belongs to the isocitrate and isopropylmalate dehydrogenases family. LeuB type 1 subfamily. In terms of assembly, homodimer. The cofactor is Mg(2+). Mn(2+) serves as cofactor.

It localises to the cytoplasm. It carries out the reaction (2R,3S)-3-isopropylmalate + NAD(+) = 4-methyl-2-oxopentanoate + CO2 + NADH. It functions in the pathway amino-acid biosynthesis; L-leucine biosynthesis; L-leucine from 3-methyl-2-oxobutanoate: step 3/4. In terms of biological role, catalyzes the oxidation of 3-carboxy-2-hydroxy-4-methylpentanoate (3-isopropylmalate) to 3-carboxy-4-methyl-2-oxopentanoate. The product decarboxylates to 4-methyl-2 oxopentanoate. The protein is 3-isopropylmalate dehydrogenase of Nitratidesulfovibrio vulgaris (strain ATCC 29579 / DSM 644 / CCUG 34227 / NCIMB 8303 / VKM B-1760 / Hildenborough) (Desulfovibrio vulgaris).